The sequence spans 62 residues: U10-hottentoxin-Hj3a (62 aa).

Positions 1-22 (MQKLLIILILFCILKFNVDVEG) are cleaved as a signal peptide. 3 disulfide bridges follow: cysteine 28-cysteine 46, cysteine 33-cysteine 59, and cysteine 37-cysteine 61.

This sequence belongs to the short scorpion toxin superfamily. Potassium channel inhibitor family. Alpha-KTx 23 subfamily. As to expression, expressed by the venom gland.

It localises to the secreted. In terms of biological role, may block potassium channels. The chain is U10-hottentoxin-Hj3a from Hottentotta judaicus (Black scorpion).